A 480-amino-acid polypeptide reads, in one-letter code: Proline--tRNA ligase (480 aa).

It belongs to the class-II aminoacyl-tRNA synthetase family. ProS type 3 subfamily. As to quaternary structure, homodimer.

It is found in the cytoplasm. The catalysed reaction is tRNA(Pro) + L-proline + ATP = L-prolyl-tRNA(Pro) + AMP + diphosphate. In terms of biological role, catalyzes the attachment of proline to tRNA(Pro) in a two-step reaction: proline is first activated by ATP to form Pro-AMP and then transferred to the acceptor end of tRNA(Pro). This Metallosphaera sedula (strain ATCC 51363 / DSM 5348 / JCM 9185 / NBRC 15509 / TH2) protein is Proline--tRNA ligase.